The chain runs to 268 residues: uncharacterized protein (268 aa).

This sequence to yeast YKR075c.

This is an uncharacterized protein from Saccharomyces cerevisiae (strain ATCC 204508 / S288c) (Baker's yeast).